Here is an 827-residue protein sequence, read N- to C-terminus: Multiple RNA-binding domain-containing protein 1 (827 aa).

The RRM 1 domain maps to 5 to 78; that stretch reads SRIFVKNLPP…SRISVDIAKP (74 aa). Disordered regions lie at residues 77–116, 176–230, and 256–299; these read KPIA…TAAA, AGLE…ATDD, and AASG…DPES. Residues 179–189 are compositionally biased toward acidic residues; it reads EDGESDDEYED. Low complexity-rich tracts occupy residues 208-225 and 256-270; these read APLA…PVSL and AASG…STSV. Residues 277-288 show a composition bias toward basic and acidic residues; the sequence is KPEEHPAEDSRE. 4 consecutive RRM domains span residues 308 to 384, 489 to 560, 599 to 682, and 704 to 781; these read SRLF…PAAA, TTIL…KGPK, SSLF…ASHR, and TKLV…FAQA.

Belongs to the RRM MRD1 family.

It is found in the nucleus. In terms of biological role, involved in pre-rRNA processing. The sequence is that of Multiple RNA-binding domain-containing protein 1 (mrd-1) from Neurospora crassa (strain ATCC 24698 / 74-OR23-1A / CBS 708.71 / DSM 1257 / FGSC 987).